Here is a 501-residue protein sequence, read N- to C-terminus: Pyruvate kinase (501 aa).

Arg50 provides a ligand contact to substrate. K(+) is bound by residues Asn52, Ser54, Asp85, and Thr86. 52–55 (NFSH) is a binding site for ATP. The ATP site is built by Arg92 and Lys178. Glu243 lines the Mg(2+) pocket. Residues Gly266, Asp267, and Thr299 each coordinate substrate. Residue Asp267 coordinates Mg(2+).

Belongs to the pyruvate kinase family. In terms of assembly, homotetramer. Requires Mg(2+) as cofactor. K(+) is required as a cofactor.

The enzyme catalyses pyruvate + ATP = phosphoenolpyruvate + ADP + H(+). The protein operates within carbohydrate degradation; glycolysis; pyruvate from D-glyceraldehyde 3-phosphate: step 5/5. In Kluyveromyces lactis (strain ATCC 8585 / CBS 2359 / DSM 70799 / NBRC 1267 / NRRL Y-1140 / WM37) (Yeast), this protein is Pyruvate kinase (PYK1).